A 475-amino-acid chain; its full sequence is Aspartyl/glutamyl-tRNA(Asn/Gln) amidotransferase subunit B (475 aa).

The protein belongs to the GatB/GatE family. GatB subfamily. Heterotrimer of A, B and C subunits.

The catalysed reaction is L-glutamyl-tRNA(Gln) + L-glutamine + ATP + H2O = L-glutaminyl-tRNA(Gln) + L-glutamate + ADP + phosphate + H(+). The enzyme catalyses L-aspartyl-tRNA(Asn) + L-glutamine + ATP + H2O = L-asparaginyl-tRNA(Asn) + L-glutamate + ADP + phosphate + 2 H(+). Functionally, allows the formation of correctly charged Asn-tRNA(Asn) or Gln-tRNA(Gln) through the transamidation of misacylated Asp-tRNA(Asn) or Glu-tRNA(Gln) in organisms which lack either or both of asparaginyl-tRNA or glutaminyl-tRNA synthetases. The reaction takes place in the presence of glutamine and ATP through an activated phospho-Asp-tRNA(Asn) or phospho-Glu-tRNA(Gln). The protein is Aspartyl/glutamyl-tRNA(Asn/Gln) amidotransferase subunit B of Trichlorobacter lovleyi (strain ATCC BAA-1151 / DSM 17278 / SZ) (Geobacter lovleyi).